A 384-amino-acid polypeptide reads, in one-letter code: Glutamate 5-kinase (384 aa).

An ATP-binding site is contributed by K24. Substrate is bound by residues S64, D149, and N161. ATP-binding positions include 181 to 182 and 223 to 229; these read TD and TGGMRTK. The PUA domain maps to 288–370; sequence PGAILIDAGA…RDIQTLLGYT (83 aa).

It belongs to the glutamate 5-kinase family.

Its subcellular location is the cytoplasm. The enzyme catalyses L-glutamate + ATP = L-glutamyl 5-phosphate + ADP. The protein operates within amino-acid biosynthesis; L-proline biosynthesis; L-glutamate 5-semialdehyde from L-glutamate: step 1/2. Catalyzes the transfer of a phosphate group to glutamate to form L-glutamate 5-phosphate. The polypeptide is Glutamate 5-kinase (Xylella fastidiosa (strain M12)).